The primary structure comprises 199 residues: Dephospho-CoA kinase (199 aa).

Residues 3–199 form the DPCK domain; it reads VIGLTGSIGM…AAAKMPRRRS (197 aa). 11–16 serves as a coordination point for ATP; it reads GMGKST.

This sequence belongs to the CoaE family.

It is found in the cytoplasm. It catalyses the reaction 3'-dephospho-CoA + ATP = ADP + CoA + H(+). The protein operates within cofactor biosynthesis; coenzyme A biosynthesis; CoA from (R)-pantothenate: step 5/5. In terms of biological role, catalyzes the phosphorylation of the 3'-hydroxyl group of dephosphocoenzyme A to form coenzyme A. The polypeptide is Dephospho-CoA kinase (Nitrobacter winogradskyi (strain ATCC 25391 / DSM 10237 / CIP 104748 / NCIMB 11846 / Nb-255)).